A 397-amino-acid polypeptide reads, in one-letter code: Tryptophan synthase beta chain (397 aa).

Residue Lys-87 is modified to N6-(pyridoxal phosphate)lysine.

The protein belongs to the TrpB family. In terms of assembly, tetramer of two alpha and two beta chains. Pyridoxal 5'-phosphate serves as cofactor.

The catalysed reaction is (1S,2R)-1-C-(indol-3-yl)glycerol 3-phosphate + L-serine = D-glyceraldehyde 3-phosphate + L-tryptophan + H2O. It participates in amino-acid biosynthesis; L-tryptophan biosynthesis; L-tryptophan from chorismate: step 5/5. Functionally, the beta subunit is responsible for the synthesis of L-tryptophan from indole and L-serine. The sequence is that of Tryptophan synthase beta chain from Cronobacter sakazakii (strain ATCC BAA-894) (Enterobacter sakazakii).